A 453-amino-acid chain; its full sequence is Nuclear distribution protein PAC1 (453 aa).

The region spanning Gln-19 to Gly-51 is the LisH domain. The stretch at Thr-69 to Pro-96 forms a coiled coil. 7 WD repeats span residues Gly-120–Lys-161, Gly-162–Lys-201, Gly-205–Thr-244, Gly-247–Glu-286, Leu-314–Thr-355, Gly-356–Thr-395, and Ile-413–Thr-452.

The protein belongs to the WD repeat LIS1/nudF family. As to quaternary structure, self-associates. Interacts with NDL1 and dynein.

The protein localises to the cytoplasm. It localises to the cytoskeleton. The protein resides in the spindle pole. Functionally, positively regulates the activity of the minus-end directed microtubule motor protein dynein. May enhance dynein-mediated microtubule sliding by targeting dynein to the microtubule plus end. Required for nuclear migration during vegetative growth as well as development. Required for localization of dynein to the mitotic spindle poles. Recruits additional proteins to the dynein complex at SPBs. Required for retrograde early endosome (EE) transport from the hyphal tip. In Mycosarcoma maydis (Corn smut fungus), this protein is Nuclear distribution protein PAC1.